The sequence spans 397 residues: Pentatricopeptide repeat-containing protein At1g80150, mitochondrial (397 aa).

The N-terminal 81 residues, 1-81, are a transit peptide targeting the mitochondrion; it reads MLSLRHIRRF…FAFEDTVSRL (81 aa). 8 PPR repeats span residues 105-139, 140-170, 176-210, 211-245, 246-280, 281-315, 316-350, and 351-381; these read REGF…GCKR, SVKS…APSK, DAVS…GLTP, DVVT…GCKP, NLTT…QVEP, DSIT…GYKP, NLKI…KWYP, and NLDT…VHRR.

Belongs to the PPR family. P subfamily.

It is found in the mitochondrion. The polypeptide is Pentatricopeptide repeat-containing protein At1g80150, mitochondrial (Arabidopsis thaliana (Mouse-ear cress)).